The primary structure comprises 202 residues: Dephospho-CoA kinase (202 aa).

The DPCK domain maps to 6–202 (KISVTGDPSS…QCFKALKGTI (197 aa)). ATP is bound at residue 14-19 (SSGKTE).

It belongs to the CoaE family.

It is found in the cytoplasm. It catalyses the reaction 3'-dephospho-CoA + ATP = ADP + CoA + H(+). The protein operates within cofactor biosynthesis; coenzyme A biosynthesis; CoA from (R)-pantothenate: step 5/5. Catalyzes the phosphorylation of the 3'-hydroxyl group of dephosphocoenzyme A to form coenzyme A. In Chlamydia trachomatis serovar D (strain ATCC VR-885 / DSM 19411 / UW-3/Cx), this protein is Dephospho-CoA kinase.